The following is a 31-amino-acid chain: MSDIN-like toxin proprotein 8 (31 aa).

A propeptide spanning residues 1–10 is cleaved from the precursor; it reads MSDINTARLP. Residues 11 to 18 constitute a cross-link (cyclopeptide (Cys-Pro)); sequence CIGFLGIP. Residues 19-31 constitute a propeptide that is removed on maturation; it reads SVGDDIEMVLRHG.

This sequence belongs to the MSDIN fungal toxin family. In terms of processing, processed by the macrocyclase-peptidase enzyme POPB to yield a toxic cyclic octapeptide. POPB first removes 10 residues from the N-terminus. Conformational trapping of the remaining peptide forces the enzyme to release this intermediate rather than proceed to macrocyclization. The enzyme rebinds the remaining peptide in a different conformation and catalyzes macrocyclization of the N-terminal 8 residues.

Functionally, probable toxin that belongs to the MSDIN-like toxin family responsible for a large number of food poisoning cases and deaths. The polypeptide is MSDIN-like toxin proprotein 8 (Amanita bisporigera (Destroying angel)).